The primary structure comprises 896 residues: Trehalose-phosphatase (896 aa).

The segment at 1 to 554 (MTTTAQDNSP…SNDDMERKMT (554 aa)) is glycosyltransferase.

In the N-terminal section; belongs to the glycosyltransferase 20 family. This sequence in the C-terminal section; belongs to the trehalose phosphatase family. In terms of assembly, the trehalose synthase complex is composed of the two catalytic subunits TPS1 and TPS2, and at least one of the two regulatory subunits TPS3 or TSL1. The cofactor is Mg(2+).

It localises to the cytoplasm. The catalysed reaction is alpha,alpha-trehalose 6-phosphate + H2O = alpha,alpha-trehalose + phosphate. It participates in carbohydrate biosynthesis. Inhibited by EDTA. In terms of biological role, phosphatase catalytic subunit of the trehalose synthase complex that catalyzes the production of trehalose from glucose-6-phosphate and UDP-alpha-D-glucose in a two step process. The chain is Trehalose-phosphatase from Saccharomyces cerevisiae (strain ATCC 204508 / S288c) (Baker's yeast).